The following is a 205-amino-acid chain: Red chlorophyll catabolite reductase (205 aa).

Substrate-binding residues include Glu-39 and Asp-175.

In terms of assembly, homodimer. Post-translationally, the N-terminus is blocked. As to expression, in etiolated and green primary leaves. Low amount in roots.

The protein localises to the plastid. The protein resides in the chloroplast stroma. The catalysed reaction is primary fluorescent chlorophyll catabolite + 2 oxidized [2Fe-2S]-[ferredoxin] = red chlorophyll catabolite + 2 reduced [2Fe-2S]-[ferredoxin] + 3 H(+). Its pathway is porphyrin-containing compound metabolism; chlorophyll degradation. Functionally, catalyzes the key reaction of chlorophyll catabolism, porphyrin macrocycle cleavage of pheophorbide a (pheide a) to a primary fluorescent catabolite (pFCC). Works in a two-step reaction with pheophorbide a oxygenase (PaO) by reducing the C20/C1 double bond of the intermediate, RCC. This is Red chlorophyll catabolite reductase (rccR) from Hordeum vulgare (Barley).